A 396-amino-acid polypeptide reads, in one-letter code: tRNA-specific 2-thiouridylase MnmA (396 aa).

Residues 42 to 49 (GMSGGVDS) and Met68 contribute to the ATP site. Residues 128 to 130 (NPD) are interaction with target base in tRNA. Cys133 serves as the catalytic Nucleophile. Cys133 and Cys230 are disulfide-bonded. Gly158 provides a ligand contact to ATP. Positions 180–182 (KDQ) are interaction with tRNA. Catalysis depends on Cys230, which acts as the Cysteine persulfide intermediate. The interaction with tRNA stretch occupies residues 342-343 (RY).

This sequence belongs to the MnmA/TRMU family.

It is found in the cytoplasm. The catalysed reaction is S-sulfanyl-L-cysteinyl-[protein] + uridine(34) in tRNA + AH2 + ATP = 2-thiouridine(34) in tRNA + L-cysteinyl-[protein] + A + AMP + diphosphate + H(+). Functionally, catalyzes the 2-thiolation of uridine at the wobble position (U34) of tRNA, leading to the formation of s(2)U34. This Pseudoalteromonas atlantica (strain T6c / ATCC BAA-1087) protein is tRNA-specific 2-thiouridylase MnmA.